The primary structure comprises 622 residues: Chaperone protein HscA homolog (622 aa).

The protein belongs to the heat shock protein 70 family.

Its function is as follows. Chaperone involved in the maturation of iron-sulfur cluster-containing proteins. Has a low intrinsic ATPase activity which is markedly stimulated by HscB. The protein is Chaperone protein HscA homolog of Burkholderia pseudomallei (strain 1710b).